Here is a 696-residue protein sequence, read N- to C-terminus: Gametogenetin-binding protein 2 (696 aa).

Phosphoserine occurs at positions 360 and 602.

In terms of assembly, interacts with isoform 1 of GGN. In terms of tissue distribution, testis-specific.

The protein resides in the cytoplasmic vesicle. Functionally, may be involved in spermatogenesis. This is Gametogenetin-binding protein 2 (Ggnbp2) from Mus musculus (Mouse).